We begin with the raw amino-acid sequence, 62 residues long: Overexpressed in colon carcinoma 1 protein homolog (62 aa).

Gly residues predominate over residues 1–16 (MGCGNSTAGGAGGRGA). The segment at 1-62 (MGCGNSTAGG…SGQTKAAPKD (62 aa)) is disordered.

This sequence belongs to the OCC1 family.

This Gallus gallus (Chicken) protein is Overexpressed in colon carcinoma 1 protein homolog.